Reading from the N-terminus, the 193-residue chain is Probable nicotinate-nucleotide adenylyltransferase (193 aa).

It belongs to the NadD family.

It carries out the reaction nicotinate beta-D-ribonucleotide + ATP + H(+) = deamido-NAD(+) + diphosphate. The protein operates within cofactor biosynthesis; NAD(+) biosynthesis; deamido-NAD(+) from nicotinate D-ribonucleotide: step 1/1. Its function is as follows. Catalyzes the reversible adenylation of nicotinate mononucleotide (NaMN) to nicotinic acid adenine dinucleotide (NaAD). This is Probable nicotinate-nucleotide adenylyltransferase from Flavobacterium johnsoniae (strain ATCC 17061 / DSM 2064 / JCM 8514 / BCRC 14874 / CCUG 350202 / NBRC 14942 / NCIMB 11054 / UW101) (Cytophaga johnsonae).